The following is a 185-amino-acid chain: Cytidylate kinase (185 aa).

An ATP-binding site is contributed by 8-16 (GPPGSGKTT).

Belongs to the cytidylate kinase family. Type 2 subfamily.

It localises to the cytoplasm. It carries out the reaction CMP + ATP = CDP + ADP. It catalyses the reaction dCMP + ATP = dCDP + ADP. The chain is Cytidylate kinase from Desulfurococcus amylolyticus (strain DSM 18924 / JCM 16383 / VKM B-2413 / 1221n) (Desulfurococcus kamchatkensis).